Here is a 198-residue protein sequence, read N- to C-terminus: Single-stranded DNA cytosine deaminase (198 aa).

Positions 1-30 (MDSLLMNRRKFLYQFKNVRWAKGRRETYLC) match the Bipartite nuclear localization signal motif. Residues 2–26 (DSLLMNRRKFLYQFKNVRWAKGRRE) form an interaction with SUPT6H region. The CMP/dCMP-type deaminase domain maps to 23–129 (GRRETYLCYV…KAEPEGLRRL (107 aa)). Threonine 27 bears the Phosphothreonine; by PKA mark. Serine 38 carries the phosphoserine; by PKA modification. Positions 39 to 42 (ATSF) are important for interaction with CTNNBL1. Histidine 56 lines the Zn(2+) pocket. Glutamate 58 acts as the Proton donor in catalysis. Zn(2+)-binding residues include cysteine 87 and cysteine 90. The tract at residues 88 to 116 (YDCARHVADFLRGNPNLSLRIFTARLYFC) is required for interaction with RNF126. Positions 183-198 (LYEVDDLRDAFRTLGL) match the Nuclear export signal motif.

Belongs to the cytidine and deoxycytidylate deaminase family. As to quaternary structure, interacts with CTNNBL1; the interaction is important for the immunoglobulin switch activity of AICDA. Interacts (via its NLS) with KPNA1. Interacts with PKA/PRKACA and PRKAR1A/PKR1. Interacts with TRIM28 and NCL. Interacts with SUPT6H. Interacts with RNF126. Directly interacts with MCM3AP; this interaction may favor AICDA recruitment to immunoglobulin variable region genes, hence promoting somatic hypermutations. It depends on Zn(2+) as a cofactor. Ser-38 is the major site whereas Thr-27 is the minor site of phosphorylation. Phosphorylation regulates its class-switch recombination activity. Post-translationally, probably monoubiquitinated on several residues by RNF126. In terms of tissue distribution, strongly expressed in lymph nodes and tonsils.

It localises to the nucleus. The protein resides in the cytoplasm. The protein localises to the cytosol. The catalysed reaction is a 2'-deoxycytidine in single-stranded DNA + H2O + H(+) = a 2'-deoxyuridine in single-stranded DNA + NH4(+). Single-stranded DNA-specific cytidine deaminase. Involved in somatic hypermutation (SHM), gene conversion, and class-switch recombination (CSR) in B-lymphocytes by deaminating C to U during transcription of Ig-variable (V) and Ig-switch (S) region DNA. Required for several crucial steps of B-cell terminal differentiation necessary for efficient antibody responses. May also play a role in the epigenetic regulation of gene expression by participating in DNA demethylation. In Homo sapiens (Human), this protein is Single-stranded DNA cytosine deaminase (AICDA).